Reading from the N-terminus, the 146-residue chain is Large ribosomal subunit protein uL23m (146 aa).

A disordered region spans residues 108–146; it reads PDLFPEKEPTSPDPLEEELPQQRQSSDPRCPGIPSWFGL.

This sequence belongs to the universal ribosomal protein uL23 family. As to quaternary structure, component of the mitochondrial ribosome large subunit (39S) which comprises a 16S rRNA and about 50 distinct proteins.

It localises to the mitochondrion. This is Large ribosomal subunit protein uL23m (Mrpl23) from Rattus norvegicus (Rat).